The chain runs to 734 residues: Phosphoribosylformylglycinamidine synthase subunit PurL (734 aa).

The active site involves H46. Y49 and K88 together coordinate ATP. A Mg(2+)-binding site is contributed by E90. Substrate-binding positions include 91–94 and R113; that span reads SHNH. H92 acts as the Proton acceptor in catalysis. D114 contacts Mg(2+). A substrate-binding site is contributed by Q237. Position 265 (D265) interacts with Mg(2+). 309-311 contributes to the substrate binding site; it reads ESQ. ATP contacts are provided by D489 and G526. N527 provides a ligand contact to Mg(2+). S529 contributes to the substrate binding site.

This sequence belongs to the FGAMS family. In terms of assembly, monomer. Part of the FGAM synthase complex composed of 1 PurL, 1 PurQ and 2 PurS subunits.

The protein resides in the cytoplasm. It carries out the reaction N(2)-formyl-N(1)-(5-phospho-beta-D-ribosyl)glycinamide + L-glutamine + ATP + H2O = 2-formamido-N(1)-(5-O-phospho-beta-D-ribosyl)acetamidine + L-glutamate + ADP + phosphate + H(+). The protein operates within purine metabolism; IMP biosynthesis via de novo pathway; 5-amino-1-(5-phospho-D-ribosyl)imidazole from N(2)-formyl-N(1)-(5-phospho-D-ribosyl)glycinamide: step 1/2. In terms of biological role, part of the phosphoribosylformylglycinamidine synthase complex involved in the purines biosynthetic pathway. Catalyzes the ATP-dependent conversion of formylglycinamide ribonucleotide (FGAR) and glutamine to yield formylglycinamidine ribonucleotide (FGAM) and glutamate. The FGAM synthase complex is composed of three subunits. PurQ produces an ammonia molecule by converting glutamine to glutamate. PurL transfers the ammonia molecule to FGAR to form FGAM in an ATP-dependent manner. PurS interacts with PurQ and PurL and is thought to assist in the transfer of the ammonia molecule from PurQ to PurL. This is Phosphoribosylformylglycinamidine synthase subunit PurL from Gluconobacter oxydans (strain 621H) (Gluconobacter suboxydans).